The following is a 101-amino-acid chain: Urease subunit gamma (101 aa).

This sequence belongs to the urease gamma subunit family. In terms of assembly, heterotrimer of UreA (gamma), UreB (beta) and UreC (alpha) subunits. Three heterotrimers associate to form the active enzyme.

It localises to the cytoplasm. The catalysed reaction is urea + 2 H2O + H(+) = hydrogencarbonate + 2 NH4(+). It functions in the pathway nitrogen metabolism; urea degradation; CO(2) and NH(3) from urea (urease route): step 1/1. In Corynebacterium kroppenstedtii (strain DSM 44385 / JCM 11950 / CIP 105744 / CCUG 35717), this protein is Urease subunit gamma.